The following is a 318-amino-acid chain: Gamma-glutamyl hydrolase (318 aa).

The first 24 residues, 1–24, serve as a signal peptide directing secretion; that stretch reads MASPGCLLCVLGLLLCGAASLELS. The Gamma-glutamyl hydrolase domain occupies 25–318; it reads RPHGDTAKKP…SSFQQCYIFD (294 aa). N-linked (GlcNAc...) asparagine glycosylation occurs at asparagine 116. The Nucleophile role is filled by cysteine 134. Residues asparagine 163 and asparagine 203 are each glycosylated (N-linked (GlcNAc...) asparagine). Histidine 244 functions as the Proton donor in the catalytic mechanism. The N-linked (GlcNAc...) asparagine; partial glycan is linked to asparagine 307.

Belongs to the peptidase C26 family. As to quaternary structure, homodimer.

It localises to the secreted. The protein localises to the extracellular space. The protein resides in the lysosome. It is found in the melanosome. The catalysed reaction is (6S)-5,6,7,8-tetrahydrofolyl-(gamma-L-Glu)(n) + (n-1) H2O = (6S)-5,6,7,8-tetrahydrofolate + (n-1) L-glutamate. Hydrolyzes the polyglutamate sidechains of pteroylpolyglutamates. Progressively removes gamma-glutamyl residues from pteroylpoly-gamma-glutamate to yield pteroyl-alpha-glutamate (folic acid) and free glutamate. May play an important role in the bioavailability of dietary pteroylpolyglutamates and in the metabolism of pteroylpolyglutamates and antifolates. The protein is Gamma-glutamyl hydrolase of Homo sapiens (Human).